Reading from the N-terminus, the 111-residue chain is UPF0145 protein BTH_I2656 (111 aa).

The protein belongs to the UPF0145 family.

The protein is UPF0145 protein BTH_I2656 of Burkholderia thailandensis (strain ATCC 700388 / DSM 13276 / CCUG 48851 / CIP 106301 / E264).